The sequence spans 336 residues: Transmembrane protease serine 12 (336 aa).

Residues 1–18 (MASWALSAALLCLGGAFA) form the signal peptide. The Extracellular portion of the chain corresponds to 19–312 (YSELHSLSLR…HYLSQGNINR (294 aa)). Positions 66–306 (IIGGSQADTG…FQEWMTHYLS (241 aa)) constitute a Peptidase S1 domain. Cysteine 95 and cysteine 111 are joined by a disulfide. Residues histidine 110 and aspartate 159 each act as charge relay system in the active site. 3 cysteine pairs are disulfide-bonded: cysteine 194–cysteine 262, cysteine 225–cysteine 241, and cysteine 252–cysteine 282. N-linked (GlcNAc...) asparagine glycosylation is found at asparagine 207, asparagine 237, and asparagine 246. Catalysis depends on serine 256, which acts as the Charge relay system. Residues 313 to 333 (LFNMDIVLGQVLTALGSVILL) traverse the membrane as a helical segment. Residues 334–336 (GVT) lie on the Cytoplasmic side of the membrane.

The protein belongs to the peptidase S1 family. As to expression, exclusively expressed in the testis, from spermatocytes to elongated spermatids (at protein level).

Its subcellular location is the cell membrane. The protein localises to the cytoplasmic vesicle. The protein resides in the secretory vesicle. It localises to the acrosome. Functionally, required for male fertility. Plays a critical role in sperm capacitation and acrosome reactions during fertilization, and also plays a role in the regulation of proteins involved in spermatogenesis. Regulates protein pathways that promote chromosomal synapsis formation, double-strand break repair, formation of the inner mitochondrial membrane cristae and apoptosis in developing sperm. Required for normal sperm motility and binding to the zona pellucida, potentially via a role in ADAM3 protein maturation. The sequence is that of Transmembrane protease serine 12 from Mus musculus (Mouse).